Reading from the N-terminus, the 537-residue chain is MQETGIRNGAFGADKFGLKNLKQLHWNLGAPQLYQYSLAAGEATLSADGALCADTGEFTGRSPKDKFTVRDASTEKMWWAGNQSITPEQFEALYQDFIKHAEGKTLFAQDLYGGADPTFRIKTRVFTELAWHSLFIRTLLIRPETIELDTFVPELTIIDMPSFRADPMRHGVRSQNVVAIDFARKIVLIGGSYYAGEMKKSVFTTLNYYLPARGVMPMHCSANVGPKGDTAIFFGLSGTGKTTLSADPNRTLIGDDEHGWGPSGVFNFEGGCYAKCIKLSQEAEPQIFAASNRFGAVLENVVLDEDSRVPDFDDGSKTENTRSAYPLDYIPNASRTGRAPHPKNVVMLAADAFGVLPPIAKLSPAQAMYHFLSGYTAKVAGTERGLGSEPQPEFSTCFGSPFLPLDPSVYGNMLRQLIADHNVDCWLVNTGWTGGKYGTGSRMPIKVTRALLTAALDGSLRNVEFRTDKYFGFAVPTALPGVPSEILDPVNTWKDKVEFDKTARALVGMFQKNFAKFEAQVDADVRAAAPDVKLAAE.

Substrate is bound by residues Arg-61, Tyr-194, and Lys-200. ATP-binding positions include Lys-200, His-219, and Gly-235–Thr-243. Mn(2+)-binding residues include Lys-200 and His-219. Asp-256 serves as a coordination point for Mn(2+). Positions 284, 322, and 448 each coordinate ATP. Arg-322 lines the substrate pocket.

It belongs to the phosphoenolpyruvate carboxykinase (ATP) family. Mn(2+) serves as cofactor.

It localises to the cytoplasm. The enzyme catalyses oxaloacetate + ATP = phosphoenolpyruvate + ADP + CO2. Its pathway is carbohydrate biosynthesis; gluconeogenesis. Involved in the gluconeogenesis. Catalyzes the conversion of oxaloacetate (OAA) to phosphoenolpyruvate (PEP) through direct phosphoryl transfer between the nucleoside triphosphate and OAA. The chain is Phosphoenolpyruvate carboxykinase (ATP) from Bradyrhizobium sp. (strain ORS 278).